Reading from the N-terminus, the 116-residue chain is Iron-sulfur cluster insertion protein ErpA (116 aa).

Iron-sulfur cluster is bound by residues cysteine 44, cysteine 108, and cysteine 110.

This sequence belongs to the HesB/IscA family. As to quaternary structure, homodimer. It depends on iron-sulfur cluster as a cofactor.

Functionally, required for insertion of 4Fe-4S clusters for at least IspG. The polypeptide is Iron-sulfur cluster insertion protein ErpA (Pseudomonas putida (strain ATCC 47054 / DSM 6125 / CFBP 8728 / NCIMB 11950 / KT2440)).